We begin with the raw amino-acid sequence, 551 residues long: FGGY carbohydrate kinase domain-containing protein (551 aa).

It belongs to the FGGY kinase family. Expressed in kidney, lung and small intestine and to a lower extent in liver and detected in cerebrospinal fluid (at protein level).

It catalyses the reaction D-ribulose + ATP = D-ribulose 5-phosphate + ADP + H(+). It participates in carbohydrate metabolism; pentose and glucuronate interconversion. Catalyzes ATP-dependent phosphorylation of D-ribulose at C-5 to form D-ribulose 5-phosphate. Postulated to function in a metabolite repair mechanism by preventing toxic accumulation of free D-ribulose formed by non-specific phosphatase activities. Alternatively, may play a role in regulating D-ribulose 5-phosphate recycling in the pentose phosphate pathway. Can phosphorylate ribitol with low efficiency. The chain is FGGY carbohydrate kinase domain-containing protein from Homo sapiens (Human).